The chain runs to 244 residues: Acidic leucine-rich nuclear phosphoprotein 32 family member A (244 aa).

4 LRR repeats span residues 18-41 (DVKE…TDEF), 43-64 (GLEF…PKLN), 65-87 (KLKK…AEKC), and 89-110 (NLTH…EPLK). Positions 123–161 (CEVTNLNDYRENLFKLLPQLTYLDGYDRDDKEAPDSDAE) constitute an LRRCT domain. A disordered region spans residues 148–244 (YDRDDKEAPD…DQDDEGEDDD (97 aa)). The segment covering 157 to 227 (DSDAEGYVEG…EEDEGDEEAE (71 aa)) has biased composition (acidic residues).

It belongs to the ANP32 family. In terms of processing, phosphorylated on serine residues.

It is found in the nucleus. It localises to the cytoplasm. The protein resides in the endoplasmic reticulum. Implicated in a number of cellular processes, including proliferation, differentiation, caspase-dependent and caspase-independent apoptosis, suppression of transformation (tumor suppressor), inhibition of protein phosphatase 2A, regulation of mRNA trafficking and stability, and inhibition of acetyltransferases as part of the INHAT (inhibitor of histone acetyltransferases) complex. The sequence is that of Acidic leucine-rich nuclear phosphoprotein 32 family member A (anp32a) from Xenopus laevis (African clawed frog).